The chain runs to 504 residues: SPbeta prophage-derived uncharacterized protein YorI (504 aa).

The polypeptide is SPbeta prophage-derived uncharacterized protein YorI (yorI) (Bacillus subtilis (strain 168)).